The chain runs to 625 residues: Phosphomethylpyrimidine synthase (625 aa).

Substrate is bound by residues asparagine 230, methionine 259, tyrosine 288, histidine 324, 344 to 346 (SRG), 385 to 388 (DGLR), and glutamate 424. Histidine 428 contacts Zn(2+). Tyrosine 451 is a binding site for substrate. Histidine 492 contributes to the Zn(2+) binding site. The [4Fe-4S] cluster site is built by cysteine 572, cysteine 575, and cysteine 580.

It belongs to the ThiC family. Homodimer. [4Fe-4S] cluster is required as a cofactor.

The enzyme catalyses 5-amino-1-(5-phospho-beta-D-ribosyl)imidazole + S-adenosyl-L-methionine = 4-amino-2-methyl-5-(phosphooxymethyl)pyrimidine + CO + 5'-deoxyadenosine + formate + L-methionine + 3 H(+). Its pathway is cofactor biosynthesis; thiamine diphosphate biosynthesis. Catalyzes the synthesis of the hydroxymethylpyrimidine phosphate (HMP-P) moiety of thiamine from aminoimidazole ribotide (AIR) in a radical S-adenosyl-L-methionine (SAM)-dependent reaction. This is Phosphomethylpyrimidine synthase from Xanthomonas campestris pv. campestris (strain 8004).